Reading from the N-terminus, the 698-residue chain is Macrophomene synthase (698 aa).

The terpene cyclase stretch occupies residues 21–340; that stretch reads MEYMYSVPLD…SCDRYSSYRR (320 aa). D113 contributes to the Mg(2+) binding site. The DDXXD 1 signature appears at 113–117; it reads DNIAE. Positions 242-250 match the NSE/DTE motif; sequence NDFFSFNYE. Residues 341–696 are prenyltransferase; sequence EKHQMELPIR…IQLALERLRI (356 aa). Residues 368–387 form a disordered region; sequence LPNGKQLDAPTESSGKDLSD. Isopentenyl diphosphate-binding residues include K417, R420, and H449. The Mg(2+) site is built by D456 and D460. The DDXXD 2 motif lies at 456 to 460; that stretch reads DDIED. Residue R465 coordinates dimethylallyl diphosphate. R466 contacts isopentenyl diphosphate. Positions 543, 544, 579, 586, 596, and 606 each coordinate dimethylallyl diphosphate.

In the N-terminal section; belongs to the terpene synthase family. It in the C-terminal section; belongs to the FPP/GGPP synthase family. Hexamer. The cofactor is Mg(2+).

The enzyme catalyses 5 isopentenyl diphosphate + dimethylallyl diphosphate = all-trans-hexaprenyl diphosphate + 5 diphosphate. The catalysed reaction is all-trans-hexaprenyl diphosphate = macrophomene + diphosphate. Bifunctional terpene synthase that converts dimethylallyl diphosphate (DMAPP) and isopentenyl diphosphate (IPP) into macrophomene as a single product. The C-terminal prenyltransferase (PT) domain of MpMS catalyzes formation of hexaprenyl diphosphate (HexPP), whereas the N-terminal terpene cyclase (TC) domain catalyzes the cyclization of HexPP to macrophomene. The polypeptide is Macrophomene synthase (Macrophomina phaseolina (strain MS6) (Charcoal rot fungus)).